The primary structure comprises 529 residues: Laccase-1 (529 aa).

Residues 1–23 (MFPGARILATLTLALHLLHGTHA) form the signal peptide. Plastocyanin-like domains are found at residues 25-159 (IGPT…FIVY), 170-312 (DVDN…ILRY), and 380-499 (TAPV…FAED). The N-linked (GlcNAc...) asparagine glycan is linked to N57. Positions 96, 98, 141, and 143 each coordinate Cu cation. Cystine bridges form between C117-C514 and C149-C236. N239 and N282 each carry an N-linked (GlcNAc...) asparagine glycan. Cu cation contacts are provided by H425, H428, H430, H481, C482, H483, and H487.

Belongs to the multicopper oxidase family. Requires Cu cation as cofactor.

The protein resides in the secreted. The catalysed reaction is 4 hydroquinone + O2 = 4 benzosemiquinone + 2 H2O. In terms of biological role, lignin degradation and detoxification of lignin-derived products. The polypeptide is Laccase-1 (POX1) (Pleurotus ostreatus (Oyster mushroom)).